The primary structure comprises 175 residues: NADH-ubiquinone oxidoreductase chain 6 (175 aa).

Helical transmembrane passes span 1–21, 25–45, 47–67, 88–108, and 149–169; these read MMLY…VGFS, SPIY…GIVL, FGGS…MMVV, AVLG…YYVL, and YGTW…VVIM.

Belongs to the complex I subunit 6 family. In terms of assembly, core subunit of respiratory chain NADH dehydrogenase (Complex I) which is composed of 45 different subunits.

Its subcellular location is the mitochondrion inner membrane. It catalyses the reaction a ubiquinone + NADH + 5 H(+)(in) = a ubiquinol + NAD(+) + 4 H(+)(out). Its function is as follows. Core subunit of the mitochondrial membrane respiratory chain NADH dehydrogenase (Complex I) which catalyzes electron transfer from NADH through the respiratory chain, using ubiquinone as an electron acceptor. Essential for the catalytic activity and assembly of complex I. In Bos mutus grunniens (Wild yak), this protein is NADH-ubiquinone oxidoreductase chain 6 (MT-ND6).